Reading from the N-terminus, the 137-residue chain is Basic phospholipase A2 homolog 4a (137 aa).

Positions 1–16 (MRTLWIVTVLLVGVEG) are cleaved as a signal peptide. Disulfide bonds link Cys-42/Cys-131, Cys-44/Cys-60, Cys-59/Cys-111, Cys-65/Cys-137, Cys-66/Cys-104, Cys-73/Cys-97, and Cys-91/Cys-102. The interval 121-133 (KKYKIYPKFFCKK) is important for membrane-damaging activities in eukaryotes and bacteria; heparin-binding.

Belongs to the phospholipase A2 family. Group II subfamily. K49 sub-subfamily. As to quaternary structure, homodimer; non-covalently linked. As to expression, expressed by the venom gland.

The protein resides in the secreted. Snake venom phospholipase A2 homolog that lacks enzymatic activity. Is myotoxic and displays edema-inducing activities. A model of myotoxic mechanism has been proposed: an apo Lys49-PLA2 is activated by the entrance of a hydrophobic molecule (e.g. fatty acid) at the hydrophobic channel of the protein leading to a reorientation of a monomer. This reorientation causes a transition between 'inactive' to 'active' states, causing alignment of C-terminal and membrane-docking sites (MDoS) side-by-side and putting the membrane-disruption sites (MDiS) in the same plane, exposed to solvent and in a symmetric position for both monomers. The MDoS region stabilizes the toxin on membrane by the interaction of charged residues with phospholipid head groups. Subsequently, the MDiS region destabilizes the membrane with penetration of hydrophobic residues. This insertion causes a disorganization of the membrane, allowing an uncontrolled influx of ions (i.e. calcium and sodium), and eventually triggering irreversible intracellular alterations and cell death. This is Basic phospholipase A2 homolog 4a from Bothrops asper (Terciopelo).